Here is a 312-residue protein sequence, read N- to C-terminus: Malate dehydrogenase (312 aa).

NAD(+) is bound by residues 7–13 (GAAGGIG) and Asp34. Substrate contacts are provided by Arg81 and Arg87. NAD(+) contacts are provided by residues Asn94 and 117–119 (ITN). Substrate-binding residues include Asn119 and Arg153. Catalysis depends on His177, which acts as the Proton acceptor. NAD(+) is bound at residue Met227.

The protein belongs to the LDH/MDH superfamily. MDH type 1 family. As to quaternary structure, homodimer.

It catalyses the reaction (S)-malate + NAD(+) = oxaloacetate + NADH + H(+). In terms of biological role, catalyzes the reversible oxidation of malate to oxaloacetate. In Salmonella choleraesuis (strain SC-B67), this protein is Malate dehydrogenase.